Here is a 160-residue protein sequence, read N- to C-terminus: Transcriptional repressor NrdR (160 aa).

A zinc finger spans residues 3-34 (CPYCQYEDTQVKDSRPVEEGAVIRRRRVCPVC). Residues 49–139 (LLVSKKSGRC…VYRDFRNASD (91 aa)) form the ATP-cone domain.

It belongs to the NrdR family. Zn(2+) is required as a cofactor.

Functionally, negatively regulates transcription of bacterial ribonucleotide reductase nrd genes and operons by binding to NrdR-boxes. This Bartonella quintana (strain Toulouse) (Rochalimaea quintana) protein is Transcriptional repressor NrdR.